Reading from the N-terminus, the 327-residue chain is Methionyl-tRNA formyltransferase (327 aa).

121–124 (SLLP) is a (6S)-5,6,7,8-tetrahydrofolate binding site.

Belongs to the Fmt family.

It catalyses the reaction L-methionyl-tRNA(fMet) + (6R)-10-formyltetrahydrofolate = N-formyl-L-methionyl-tRNA(fMet) + (6S)-5,6,7,8-tetrahydrofolate + H(+). Its function is as follows. Attaches a formyl group to the free amino group of methionyl-tRNA(fMet). The formyl group appears to play a dual role in the initiator identity of N-formylmethionyl-tRNA by promoting its recognition by IF2 and preventing the misappropriation of this tRNA by the elongation apparatus. The sequence is that of Methionyl-tRNA formyltransferase from Burkholderia ambifaria (strain ATCC BAA-244 / DSM 16087 / CCUG 44356 / LMG 19182 / AMMD) (Burkholderia cepacia (strain AMMD)).